The chain runs to 168 residues: Protein archease (168 aa).

Alanine 2 bears the N-acetylalanine mark. Ca(2+) is bound by residues aspartate 39, aspartate 167, and isoleucine 168.

It belongs to the archease family. In terms of assembly, component of the tRNA-splicing ligase complex.

Its function is as follows. Component of the tRNA-splicing ligase complex required to facilitate the enzymatic turnover of catalytic subunit RTCB. Together with DDX1, acts by facilitating the guanylylation of RTCB, a key intermediate step in tRNA ligation. This is Protein archease (Zbtb8os) from Mus musculus (Mouse).